A 450-amino-acid chain; its full sequence is NADP-specific glutamate dehydrogenase (450 aa).

The active site involves Lys111.

Belongs to the Glu/Leu/Phe/Val dehydrogenases family. As to quaternary structure, homohexamer.

The catalysed reaction is L-glutamate + NADP(+) + H2O = 2-oxoglutarate + NH4(+) + NADPH + H(+). In Hebeloma cylindrosporum, this protein is NADP-specific glutamate dehydrogenase.